Here is a 1074-residue protein sequence, read N- to C-terminus: BRD4-interacting chromatin-remodeling complex-associated protein-like (1074 aa).

4 disordered regions span residues 542–603 (AVSS…NTPG), 620–689 (TSPI…GQKR), 834–874 (TPLD…HDQF), and 887–952 (GNIS…SKLP). Composition is skewed to polar residues over residues 544 to 576 (SSAS…QANR), 591 to 603 (ASKS…NTPG), 620 to 629 (TSPIPTSKTT), and 660 to 680 (GATQ…TAVQ). Ser-621 is subject to Phosphoserine. 3 stretches are compositionally biased toward basic and acidic residues: residues 889–904 (ISKK…KFDR), 913–925 (PPED…DPAK), and 934–948 (EGHR…HGSE). Residue Ser-976 is modified to Phosphoserine.

In terms of assembly, component of the multiprotein chromatin-remodeling complexes SWI/SNF: SWI/SNF-A (BAF), SWI/SNF-B (PBAF) and related complexes. The canonical complex contains a catalytic subunit (either SMARCA4/BRG1/BAF190A or SMARCA2/BRM/BAF190B) and at least SMARCE1, ACTL6A/BAF53, SMARCC1/BAF155, SMARCC2/BAF170, and SMARCB1/SNF5/BAF47. Other subunits specific to each of the complexes may also be present permitting several possible combinations developmentally and tissue specific. Component of the SWI/SNF (GBAF) subcomplex, which includes at least BICRA or BICRAL (mutually exclusive), BRD9, SS18, the core BAF subunits, SMARCA2/BRM, SMARCA4/BRG1/BAF190A, ACTL6A/BAF53, SMARCC1/BAF155, and SMARCD1/BAF60A.

In terms of biological role, component of SWI/SNF chromatin remodeling subcomplex GBAF that carries out key enzymatic activities, changing chromatin structure by altering DNA-histone contacts within a nucleosome in an ATP-dependent manner. The chain is BRD4-interacting chromatin-remodeling complex-associated protein-like from Mus musculus (Mouse).